The following is a 445-amino-acid chain: Methionine aminopeptidase 2 (445 aa).

The segment at 1-80 (MAAQVASGVG…TSKVQTEPPR (80 aa)) is disordered. Over residues 57–71 (AKKKKKKTKKKKKGT) the composition is skewed to basic residues. H195 contacts substrate. A divalent metal cation contacts are provided by D215, D226, and H295. H303 contributes to the substrate binding site. The a divalent metal cation site is built by E331 and E426.

Belongs to the peptidase M24A family. Methionine aminopeptidase eukaryotic type 2 subfamily. The cofactor is Co(2+). It depends on Zn(2+) as a cofactor. Requires Mn(2+) as cofactor. Fe(2+) serves as cofactor.

The protein resides in the cytoplasm. It carries out the reaction Release of N-terminal amino acids, preferentially methionine, from peptides and arylamides.. Functionally, cotranslationally removes the N-terminal methionine from nascent proteins. The N-terminal methionine is often cleaved when the second residue in the primary sequence is small and uncharged (Met-Ala-, Cys, Gly, Pro, Ser, Thr, or Val). The polypeptide is Methionine aminopeptidase 2 (Paracoccidioides brasiliensis (strain Pb18)).